The sequence spans 187 residues: Corticoliberin (187 aa).

Residues 1-19 form the signal peptide; it reads MRLRLLVSAGMLLVALSSC. Positions 20–144 are excised as a propeptide; that stretch reads LPCRALLSRG…HQGALERERR (125 aa). 2 disordered regions span residues 75 to 94 and 114 to 146; these read AARLSPNSTPLTAGRGSRPS and QRSLDSRAEPAERGAEDALGGHQGALERERRSE. Residues 117–129 show a composition bias toward basic and acidic residues; it reads LDSRAEPAERGAE. I185 is subject to Isoleucine amide.

The protein belongs to the sauvagine/corticotropin-releasing factor/urotensin I family. Interacts (via C-terminus) with CRFR1 (via N-terminal extracellular domain). As to expression, expressed in parvocellular paraventricular nucleus of the hypothalamus and in medial accessory olivary nucleus.

The protein resides in the secreted. In terms of biological role, hormone regulating the release of corticotropin from pituitary gland. Induces NLRP6 in intestinal epithelial cells, hence may influence gut microbiota profile. The polypeptide is Corticoliberin (Crh) (Mus musculus (Mouse)).